A 379-amino-acid chain; its full sequence is Putative F-box protein At5g62660 (379 aa).

An F-box domain is found at 35 to 84 (ALVAPEIPLDLLIEILTKLPAKSLMRFKCVSKLWSSLIRSRFFSNCYLTV).

The sequence is that of Putative F-box protein At5g62660 from Arabidopsis thaliana (Mouse-ear cress).